The sequence spans 86 residues: Collagen alpha-1(XII) chain (86 aa).

The segment covering 1-12 (NQPGPPGPPGPP) has biased composition (pro residues). The segment at 1–86 (NQPGPPGPPG…PGRPGDSGIR (86 aa)) is disordered. 14 positions are modified to hydroxyproline: P6, P9, P12, P18, P24, P27, P30, P42, P51, P54, P65, P74, P77, and P80. The segment covering 16–25 (GEPGPGGRPG) has biased composition (gly residues). Residues 35 to 50 (PQGERGLPGEXGERGL) are compositionally biased toward low complexity. Residues 57-71 (QGESRTGPPGSTGSR) show a composition bias toward low complexity.

This sequence belongs to the fibril-associated collagens with interrupted helices (FACIT) family. In terms of assembly, trimer of identical chains each containing 190 kDa of non-triple-helical sequences. The triple-helical tail is stabilized by disulfide bonds at each end. Post-translationally, prolines at the third position of the tripeptide repeating unit (G-X-Y) are hydroxylated in some or all of the chains.

It is found in the secreted. It localises to the extracellular space. The protein resides in the extracellular matrix. Functionally, type XII collagen interacts with type I collagen-containing fibrils, the COL1 domain could be associated with the surface of the fibrils, and the COL2 and NC3 domains may be localized in the perifibrillar matrix. This Bos taurus (Bovine) protein is Collagen alpha-1(XII) chain (COL12A1).